A 567-amino-acid polypeptide reads, in one-letter code: Hexose transporter HXT15 (567 aa).

Residues 1–19 show a composition bias toward polar residues; that stretch reads MASEQSSPEINADNLNSSA. The interval 1 to 32 is disordered; it reads MASEQSSPEINADNLNSSAADVHVQPPGEKEW. At 1–55 the chain is on the cytoplasmic side; the sequence is MASEQSSPEINADNLNSSAADVHVQPPGEKEWSDGFYDKEVINGNTPDAPKRGFL. A helical membrane pass occupies residues 56 to 76; sequence GYLIIYLLCYPVSFGGFLPGW. Residues 77–112 lie on the Extracellular side of the membrane; the sequence is DSGITAGFINMDNFKMNFGSYKHSTGEYYLSNVRMG. The helical transmembrane segment at 113-133 threads the bilayer; it reads LLVAMFSVGCSIGGVAFARLA. Residues 134-139 are Cytoplasmic-facing; that stretch reads DTLGRR. The chain crosses the membrane as a helical span at residues 140–160; sequence LAIVIVVLVYMVGAIIQISSN. Residues 161-170 lie on the Extracellular side of the membrane; it reads HKWYQYFVGK. A helical membrane pass occupies residues 171–191; the sequence is IIYGLGAGGCSVLCPMLLSEI. At 192 to 197 the chain is on the cytoplasmic side; that stretch reads APTDLR. Residues 198–218 form a helical membrane-spanning segment; that stretch reads GGLVSLYQLNMTFGIFLGYCS. Residues 219-232 lie on the Extracellular side of the membrane; that stretch reads VYGTRKYSNTAQWR. A helical membrane pass occupies residues 233–253; the sequence is IPVGLCFLWALIIIVGMLLVP. At 254–336 the chain is on the cytoplasmic side; the sequence is ESPRYLIECE…VQTFLQLTGE (83 aa). A helical transmembrane segment spans residues 337–353; that stretch reads NYFFFYGTTIFKSVGLT. Residues 354-359 are Extracellular-facing; the sequence is DGFETS. Residues 360 to 377 traverse the membrane as a helical segment; sequence IVLGTVNFFSTIIAVMVV. Topologically, residues 378-384 are cytoplasmic; sequence DKIGRRK. Residues 385-405 traverse the membrane as a helical segment; the sequence is CLLFGAASMMACMVIFASIGV. The Extracellular segment spans residues 406–427; sequence KCLYPHGQDGPSSKGAGNAMIV. A helical membrane pass occupies residues 428–448; that stretch reads FTCFYIFCFATTWAPVAYIVV. Residues 449-465 are Cytoplasmic-facing; the sequence is AESFPSKVKSKAMSIST. A helical transmembrane segment spans residues 466 to 486; it reads AFNWLWQFLIGFFTPFITGSI. Position 487 (H487) is a topological domain, extracellular. A helical transmembrane segment spans residues 488 to 508; that stretch reads FYYGYVFVGCLVAMFLYVFFF. Over 509-567 the chain is Cytoplasmic; the sequence is LPETIGLSLEEIQLLYEEGIKPWKSASWVPPSRRGASSRETEAKKKSWKEVLKFPKSFN. A disordered region spans residues 533–555; it reads SASWVPPSRRGASSRETEAKKKS. Residues 545-555 are compositionally biased toward basic and acidic residues; sequence SSRETEAKKKS.

It belongs to the major facilitator superfamily. Sugar transporter (TC 2.A.1.1) family.

Its subcellular location is the membrane. In terms of biological role, probable glucose transporter. In Saccharomyces cerevisiae (strain ATCC 204508 / S288c) (Baker's yeast), this protein is Hexose transporter HXT15 (HXT15).